Reading from the N-terminus, the 360-residue chain is Putative F-box protein At1g65770 (360 aa).

The 49-residue stretch at 2 to 50 (ADWSTLPVDLLNMIAGRLFSNIELKRFRSICRSWRSSVPGAGKKNPFRT) folds into the F-box domain.

In Arabidopsis thaliana (Mouse-ear cress), this protein is Putative F-box protein At1g65770.